A 2431-amino-acid polypeptide reads, in one-letter code: Reducing polyketide synthase rads1 (2431 aa).

One can recognise a Ketosynthase family 3 (KS3) domain in the interval 10–440 (RAPIAIIGLA…GTNAHIVLER (431 aa)). Residues Cys-184, His-319, and His-363 each act as for beta-ketoacyl synthase activity in the active site. The malonyl-CoA:ACP transacylase (MAT) domain stretch occupies residues 558–895 (FVFTGQGAQW…NLAAELFRRG (338 aa)). Residues 944–1080 (KSILGAELPS…GLISIAYEDT (137 aa)) form an N-terminal hotdog fold region. Residues 944-1267 (KSILGAELPS…LAELEVDDAA (324 aa)) form the PKS/mFAS DH domain. Positions 946–1264 (ILGAELPSMD…DFRLAELEVD (319 aa)) are dehydratase (DH) domain. His-976 acts as the Proton acceptor; for dehydratase activity in catalysis. The segment at 1108-1267 (PETCSKERFY…LAELEVDDAA (160 aa)) is C-terminal hotdog fold. The active-site Proton donor; for dehydratase activity is the Asp-1174. Residues 1705–2023 (GLLNTLHFVP…QGKHLGKMIL (319 aa)) form an enoyl reductase (ER) domain region. Residue Cys-1822 is the Phosphocysteine intermediate of the active site. The tract at residues 2048-2228 (ATYLIVGGLG…VSVNLGIMRD (181 aa)) is ketoreductase (KR) domain. In terms of domain architecture, Carrier spans 2346 to 2423 (VAAAIITEAL…TFAVQIAKKS (78 aa)). The residue at position 2383 (Ser-2383) is an O-(pantetheine 4'-phosphoryl)serine.

The protein operates within secondary metabolite biosynthesis. Functionally, reducing polyketide synthase; part of the gene cluster that mediates the biosynthesis of radicicol, a resorcylic acid lactone (RAL) that irreversibly inhibits the HSP90 molecular chaperone, an important target for cancer chemotherapy. The cluster encodes only two apparent post-PKS enzymes, a cytochrome P450 monooxygenase (radP) and a non-heme halogenase (radH) that introduce the epoxide and the chlorine, respectively. If this cluster includes all the genes required for radicicol biosynthesis, the remaining structural features of radicicol are presumably generated by the PKSs rads1 and rads2. The C-2' ketone could arise if the R-PKS rads1 and NR-PKS rads2 each carry out four iterations, in contrast to the five iteration-three iteration split for the hypothemycin PKSs. The origin of the cis 5',6' double bond is not known. The radicicol R-PKS radS1 ER domain may catalyze either double bond isomerization or reduction in the third iteration. This chain is Reducing polyketide synthase rads1, found in Floropilus chiversii (Chaetomium chiversii).